The following is a 309-amino-acid chain: MQDIQGIVDSIYDSMLPRLGEGKVADYIPELAKVDPNQFGIAITTVDGTTYTAGNALVPFSIQSISKVFMLTLALGKAGETVWNRVGREPSGSSFNSIVQLEHEHGIPRNPFVNAGAIVVTDIVLSGHQPREAIGELLRFVRYLADDDTISIDDTVAKSEQATGFRNFALANFMRSFGNLHHPVEHTLGVYFHQCALSMTCAQLSRAGLFLANRGRNPLSGHTVVSDRRARRINALMLTCGHYDGSGDFAYHVGLPGKSGVGGGIMAVAPGNASIAVWSPGLNKVGNSALGSQALELLATKTGWSVFGA.

Ser-64, Asn-114, Glu-160, Asn-167, Tyr-191, Tyr-243, and Val-261 together coordinate substrate.

It belongs to the glutaminase family. In terms of assembly, homotetramer.

It carries out the reaction L-glutamine + H2O = L-glutamate + NH4(+). The polypeptide is Glutaminase (Agrobacterium fabrum (strain C58 / ATCC 33970) (Agrobacterium tumefaciens (strain C58))).